Here is a 205-residue protein sequence, read N- to C-terminus: MNIGITDPLNALVPMVVEQTPKGERSYDIYSRLLKERIIFLTGPVEDNMANLILAQMLFLESENPDKDIFLYINSPGGSVTAGMAIYDTMNFIKPDVSTICVGQAASMGAFLLTAGAKGKRFCLPNSRVMIHQPLGGFQGQASDFEIHAKEILSIKDKLNRLMAEHTGQPLDVISKDTDRDNFMSADQAVDYGIVDSVFKNRASK.

The active-site Nucleophile is the Ser-107. His-132 is an active-site residue.

The protein belongs to the peptidase S14 family. As to quaternary structure, fourteen ClpP subunits assemble into 2 heptameric rings which stack back to back to give a disk-like structure with a central cavity, resembling the structure of eukaryotic proteasomes.

The protein localises to the cytoplasm. It catalyses the reaction Hydrolysis of proteins to small peptides in the presence of ATP and magnesium. alpha-casein is the usual test substrate. In the absence of ATP, only oligopeptides shorter than five residues are hydrolyzed (such as succinyl-Leu-Tyr-|-NHMec, and Leu-Tyr-Leu-|-Tyr-Trp, in which cleavage of the -Tyr-|-Leu- and -Tyr-|-Trp bonds also occurs).. In terms of biological role, cleaves peptides in various proteins in a process that requires ATP hydrolysis. Has a chymotrypsin-like activity. Plays a major role in the degradation of misfolded proteins. This chain is ATP-dependent Clp protease proteolytic subunit, found in Pseudoalteromonas translucida (strain TAC 125).